The following is a 142-amino-acid chain: MAKKIAGQLKLQVAAGAANPSPPIGPALGQRGINIMEFCKAFNAASQEMEKGSPIPVVITYYQDKSFTFVMKTPPVTYFLKKAANLKSGSKTPGKASAGTISRDKVRTIAEAKMKDLNAADIEAAMRMIEGSARSMGLEVVG.

Belongs to the universal ribosomal protein uL11 family. In terms of assembly, part of the ribosomal stalk of the 50S ribosomal subunit. Interacts with L10 and the large rRNA to form the base of the stalk. L10 forms an elongated spine to which L12 dimers bind in a sequential fashion forming a multimeric L10(L12)X complex. Post-translationally, one or more lysine residues are methylated.

Its function is as follows. Forms part of the ribosomal stalk which helps the ribosome interact with GTP-bound translation factors. The protein is Large ribosomal subunit protein uL11 of Brucella anthropi (strain ATCC 49188 / DSM 6882 / CCUG 24695 / JCM 21032 / LMG 3331 / NBRC 15819 / NCTC 12168 / Alc 37) (Ochrobactrum anthropi).